Consider the following 237-residue polypeptide: Lectin alpha chain (237 aa).

Positions 8 and 10 each coordinate Mn(2+). 4 residues coordinate Ca(2+): Asp-10, Tyr-12, Asn-14, and Asp-19. Tyr-12 provides a ligand contact to a carbohydrate. Positions 19 and 24 each coordinate Mn(2+). Residue 99–100 participates in a carbohydrate binding; the sequence is LY. A Ca(2+)-binding site is contributed by Asp-208. Arg-228 contributes to the a carbohydrate binding site.

This sequence belongs to the leguminous lectin family. In terms of assembly, equilibrium between homodimer and homotetramer. Oligomerization is pH-dependent with homotetramers forming at pH 6.5 and above. The beta and gamma chains are produced by partial proteolytic processing of the lectin alpha chain by an asparaginyl endopeptidase. Mixture of 60% alpha lectin and 40% of its beta and gamma proteolytic fragments. As to expression, seed.

Its subcellular location is the vacuole. It is found in the aleurone grain. Its function is as follows. D-mannose/D-glucose-binding lectin. Has anti-inflammatory activity in rats. Induces histamine release in mast cells from hamster and rat. Induces lymphocyte proliferation and IFNG production. Shows toxicity against the aquatic snail B.glabrata at concentrations higher than 20 ug/ml. In Dioclea virgata, this protein is Lectin alpha chain.